Consider the following 150-residue polypeptide: Small ribosomal subunit protein eS6 (150 aa).

The protein belongs to the eukaryotic ribosomal protein eS6 family.

This chain is Small ribosomal subunit protein eS6, found in Caldivirga maquilingensis (strain ATCC 700844 / DSM 13496 / JCM 10307 / IC-167).